Reading from the N-terminus, the 158-residue chain is Cytochrome c2 (158 aa).

Pyrrolidone carboxylic acid is present on Gln1. Heme c is bound by residues Cys18, Cys21, His22, and Met102. Positions 129-158 are disordered; it reads AEAAPAADAAAPAAADAAAPAEPAAEGAAT.

The protein belongs to the cytochrome c family. Binds 1 heme c group covalently per subunit.

Its subcellular location is the periplasm. Cytochrome c2 is found mainly in purple, non-sulfur, photosynthetic bacteria where it functions as the electron donor to the oxidized bacteriochlorophyll in the photophosphorylation pathway. However, it may also have a role in the respiratory chain and is found in some non-photosynthetic bacteria. In Fuscovulum blasticum (Rhodobacter blasticus), this protein is Cytochrome c2.